Reading from the N-terminus, the 463-residue chain is Serine/threonine-protein kinase tricornered (463 aa).

The Protein kinase domain maps to 93–394 (FEALKVIGRG…LEDLKSVPFF (302 aa)). ATP contacts are provided by residues 99–107 (IGRGAFGEV) and lysine 122. Residues 119-180 (YAMKVLRKAD…EFLPGGDMMT (62 aa)) are interaction with mats and Mob1. Aspartate 216 (proton acceptor) is an active-site residue. Position 292 is a phosphoserine (serine 292). The AGC-kinase C-terminal domain occupies 395–463 (RGVDWEHIRE…YKRFEVRNLE (69 aa)). Residue threonine 453 is modified to Phosphothreonine.

The protein belongs to the protein kinase superfamily. AGC Ser/Thr protein kinase family. As to quaternary structure, interacts with, and is activated by, Mob1. It depends on Mg(2+) as a cofactor. In terms of tissue distribution, expressed in the peripheral and central nervous system (at protein level). Expressed in the wing imaginal disk.

It is found in the cytoplasm. The protein localises to the nucleus. It carries out the reaction L-seryl-[protein] + ATP = O-phospho-L-seryl-[protein] + ADP + H(+). The enzyme catalyses L-threonyl-[protein] + ATP = O-phospho-L-threonyl-[protein] + ADP + H(+). With respect to regulation, activated by fry. Its function is as follows. Serine/threonine-protein kinase involved in controlling cell structure and proliferation of a variety of polarized outgrowths including epidermal hairs, bristles, arista laterals, and dendrites. Together with fry, maintains the integrity of epidermal hairs and is an essential component of the signaling pathway regulating dendritic branching of sensory neurons. Reduces neurite outgrowth by phosphorylating pav, thereby inhibiting its function in microtubule-microtubule sliding. This Drosophila melanogaster (Fruit fly) protein is Serine/threonine-protein kinase tricornered.